The sequence spans 103 residues: Pyrimidine/purine nucleoside phosphorylase (103 aa).

It belongs to the nucleoside phosphorylase PpnP family.

The catalysed reaction is a purine D-ribonucleoside + phosphate = a purine nucleobase + alpha-D-ribose 1-phosphate. It catalyses the reaction adenosine + phosphate = alpha-D-ribose 1-phosphate + adenine. It carries out the reaction cytidine + phosphate = cytosine + alpha-D-ribose 1-phosphate. The enzyme catalyses guanosine + phosphate = alpha-D-ribose 1-phosphate + guanine. The catalysed reaction is inosine + phosphate = alpha-D-ribose 1-phosphate + hypoxanthine. It catalyses the reaction thymidine + phosphate = 2-deoxy-alpha-D-ribose 1-phosphate + thymine. It carries out the reaction uridine + phosphate = alpha-D-ribose 1-phosphate + uracil. The enzyme catalyses xanthosine + phosphate = alpha-D-ribose 1-phosphate + xanthine. In terms of biological role, catalyzes the phosphorolysis of diverse nucleosides, yielding D-ribose 1-phosphate and the respective free bases. Can use uridine, adenosine, guanosine, cytidine, thymidine, inosine and xanthosine as substrates. Also catalyzes the reverse reactions. This is Pyrimidine/purine nucleoside phosphorylase from Shewanella sp. (strain MR-4).